The chain runs to 167 residues: uncharacterized protein (167 aa).

The stretch at 28–59 forms a coiled coil; it reads LTGIREELKADIDETRLIAESVLEEKEKKVVE.

This is an uncharacterized protein from Aquifex aeolicus (strain VF5).